The chain runs to 194 residues: Imidazoleglycerol-phosphate dehydratase (194 aa).

The protein belongs to the imidazoleglycerol-phosphate dehydratase family.

The protein localises to the cytoplasm. It catalyses the reaction D-erythro-1-(imidazol-4-yl)glycerol 3-phosphate = 3-(imidazol-4-yl)-2-oxopropyl phosphate + H2O. It functions in the pathway amino-acid biosynthesis; L-histidine biosynthesis; L-histidine from 5-phospho-alpha-D-ribose 1-diphosphate: step 6/9. This chain is Imidazoleglycerol-phosphate dehydratase, found in Listeria welshimeri serovar 6b (strain ATCC 35897 / DSM 20650 / CCUG 15529 / CIP 8149 / NCTC 11857 / SLCC 5334 / V8).